A 653-amino-acid polypeptide reads, in one-letter code: Threonine--tRNA ligase (653 aa).

One can recognise a TGS domain in the interval 1–61 (MIKITFPDGN…NEDAEVKLFK (61 aa)). Positions 243-542 (DHRKIGKELE…LIEHTAGKFP (300 aa)) are catalytic. Cys338, His389, and His519 together coordinate Zn(2+).

Belongs to the class-II aminoacyl-tRNA synthetase family. In terms of assembly, homodimer. Requires Zn(2+) as cofactor.

The protein localises to the cytoplasm. It carries out the reaction tRNA(Thr) + L-threonine + ATP = L-threonyl-tRNA(Thr) + AMP + diphosphate + H(+). Catalyzes the attachment of threonine to tRNA(Thr) in a two-step reaction: L-threonine is first activated by ATP to form Thr-AMP and then transferred to the acceptor end of tRNA(Thr). Also edits incorrectly charged L-seryl-tRNA(Thr). In Porphyromonas gingivalis (strain ATCC BAA-308 / W83), this protein is Threonine--tRNA ligase.